The chain runs to 221 residues: uncharacterized protein (221 aa).

The disordered stretch occupies residues 1–30 (MVPPNPAHQPARRTQPQLQPQSQPRAQPLP). Residues 12–25 (RRTQPQLQPQSQPR) show a composition bias toward polar residues. A helical membrane pass occupies residues 37 to 57 (VLCIIVALVLLGLLVGLAILI).

The protein resides in the membrane. This is an uncharacterized protein from Arabidopsis thaliana (Mouse-ear cress).